The sequence spans 234 residues: Orotate phosphoribosyltransferase (234 aa).

K37 provides a ligand contact to 5-phospho-alpha-D-ribose 1-diphosphate. Residue 45 to 46 participates in orotate binding; the sequence is FF. 5-phospho-alpha-D-ribose 1-diphosphate contacts are provided by residues 83–84, R109, K110, K113, H115, and 134–142; these read YK and DDVISAGTS. 2 residues coordinate orotate: S138 and R166.

This sequence belongs to the purine/pyrimidine phosphoribosyltransferase family. PyrE subfamily. As to quaternary structure, homodimer. Mg(2+) is required as a cofactor.

The enzyme catalyses orotidine 5'-phosphate + diphosphate = orotate + 5-phospho-alpha-D-ribose 1-diphosphate. The protein operates within pyrimidine metabolism; UMP biosynthesis via de novo pathway; UMP from orotate: step 1/2. In terms of biological role, catalyzes the transfer of a ribosyl phosphate group from 5-phosphoribose 1-diphosphate to orotate, leading to the formation of orotidine monophosphate (OMP). This Methylibium petroleiphilum (strain ATCC BAA-1232 / LMG 22953 / PM1) protein is Orotate phosphoribosyltransferase.